Reading from the N-terminus, the 256-residue chain is DNA repair protein RecO (256 aa).

Belongs to the RecO family.

Its function is as follows. Involved in DNA repair and RecF pathway recombination. The sequence is that of DNA repair protein RecO from Rhizobium johnstonii (strain DSM 114642 / LMG 32736 / 3841) (Rhizobium leguminosarum bv. viciae).